The primary structure comprises 274 residues: Large ribosomal subunit protein uL2cz/uL2cy (274 aa).

Disordered regions lie at residues 1 to 22 (MAINLYKTSTPSTRNGTVDSQV) and 224 to 274 (NPVD…RRSK).

The protein belongs to the universal ribosomal protein uL2 family. As to quaternary structure, part of the 50S ribosomal subunit.

The protein resides in the plastid. The protein localises to the chloroplast. The sequence is that of Large ribosomal subunit protein uL2cz/uL2cy (rpl2-A) from Helianthus annuus (Common sunflower).